The chain runs to 217 residues: Probable rhamnogalacturonan acetylesterase YesY (217 aa).

Serine 11 acts as the Nucleophile in catalysis. Catalysis depends on residues glutamate 178 and histidine 185.

It belongs to the 'GDSL' lipolytic enzyme family.

May play a role in the degradation of rhamnogalacturonan derived from plant cell walls. Probably has broad substrate specificity and may degrade several types of acetylated substrates. This Bacillus subtilis (strain 168) protein is Probable rhamnogalacturonan acetylesterase YesY (yesY).